We begin with the raw amino-acid sequence, 273 residues long: tRNA (guanine-N(7)-)-methyltransferase (273 aa).

S-adenosyl-L-methionine contacts are provided by G86, E109, R111, N142, A143, and L162. D165 is an active-site residue. Positions 166–174 (PHFKKTKHK) are alphaC helix. Residues T240 and E242 each coordinate S-adenosyl-L-methionine. The interval 240 to 248 (TEEGKKVQR) is alpha6 helix.

Belongs to the class I-like SAM-binding methyltransferase superfamily. TrmB family. As to quaternary structure, catalytic component of the METTL1-WDR4 complex, composed of mettl1 and wdr4.

It localises to the nucleus. It carries out the reaction guanosine(46) in tRNA + S-adenosyl-L-methionine = N(7)-methylguanosine(46) in tRNA + S-adenosyl-L-homocysteine. The enzyme catalyses a guanosine in mRNA + S-adenosyl-L-methionine = an N(7)-methylguanosine in mRNA + S-adenosyl-L-homocysteine. It catalyses the reaction a guanosine in miRNA + S-adenosyl-L-methionine = an N(7)-methylguanosine in miRNA + S-adenosyl-L-homocysteine. Its pathway is tRNA modification; N(7)-methylguanine-tRNA biosynthesis. In terms of biological role, catalytic component of METTL1-WDR4 methyltransferase complex that mediates the formation of N(7)-methylguanine in a subset of RNA species, such as tRNAs, mRNAs and microRNAs (miRNAs). Catalyzes the formation of N(7)-methylguanine at position 46 (m7G46) in a large subset of tRNAs that contain the 5'-RAGGU-3' motif within the variable loop. M7G46 interacts with C13-G22 in the D-loop to stabilize tRNA tertiary structure and protect tRNAs from decay. Also acts as a methyltransferase for a subset of internal N(7)-methylguanine in mRNAs. Internal N(7)-methylguanine methylation of mRNAs in response to stress promotes their relocalization to stress granules, thereby suppressing their translation. Also methylates a specific subset of miRNAs. This Xenopus laevis (African clawed frog) protein is tRNA (guanine-N(7)-)-methyltransferase (mettl1).